A 1593-amino-acid chain; its full sequence is Laminin subunit gamma-1 (1593 aa).

An N-terminal signal peptide occupies residues 1 to 19; that stretch reads MSLFSCLLLWTLWAACSHG. The Laminin N-terminal domain occupies 30–269; sequence RPQRCMPEFV…AISDFAVGGR (240 aa). N44 and N118 each carry an N-linked (GlcNAc...) asparagine glycan. 16 disulfide bridges follow: C270/C279, C272/C289, C291/C300, C303/C323, C326/C335, C328/C351, C354/C363, C366/C379, C382/C394, C384/C400, C402/C411, C414/C426, C429/C440, C431/C447, C449/C458, and C461/C476. Laminin EGF-like domains are found at residues 270-325, 326-381, 382-428, and 429-478; these read CKCN…ECLP, CNCN…RCLS, CGCN…GCRP, and CSCN…GCTP. The region spanning 505–673 is the Laminin IV type A domain; it reads RDDEGWKGKQ…PGTPARWVEK (169 aa). Residues N560, N634, and N654 are each glycosylated (N-linked (GlcNAc...) asparagine). Intrachain disulfides connect C708-C717, C710-C724, C726-C735, C738-C754, C757-C765, C759-C776, C779-C788, C791-C809, C812-C826, C814-C833, C836-C845, C848-C865, C868-C882, C870-C889, C891-C900, C903-C916, C919-C931, C921-C938, C940-C949, C952-C964, C967-C979, C969-C985, C987-C996, and C999-C1012. Laminin EGF-like domains follow at residues 708–756, 757–811, 812–867, 868–918, 919–966, and 967–1014; these read CNCN…DCKA, CPCP…ACRA, CSCN…KCKP, CKCS…GCER, CNCN…GCKP, and CDCD…GCQQ. N1006, N1091, N1159, N1189, N1207, N1254, N1364, and N1379 each carry an N-linked (GlcNAc...) asparagine glycan. The interval 1014–1593 is domain II and I; it reads QCPNCYSLVR…CFNTPSLERP (580 aa). The stretch at 1021–1580 forms a coiled coil; it reads LVRDKVNQQR…ANLNDIKNTL (560 aa).

As to quaternary structure, laminin is a complex glycoprotein, consisting of three different polypeptide chains (alpha, beta, gamma), which are bound to each other by disulfide bonds into a cross-shaped molecule comprising one long and three short arms with globules at each end.

Its subcellular location is the secreted. It localises to the extracellular space. The protein localises to the extracellular matrix. The protein resides in the basement membrane. Binding to cells via a high affinity receptor, laminin is thought to mediate the attachment, migration and organization of cells into tissues during embryonic development by interacting with other extracellular matrix components. The sequence is that of Laminin subunit gamma-1 (lamc1) from Danio rerio (Zebrafish).